The sequence spans 186 residues: Peptidyl-tRNA hydrolase (186 aa).

Position 16 (tyrosine 16) interacts with tRNA. The active-site Proton acceptor is the histidine 21. Residues tyrosine 60 and asparagine 62 each coordinate tRNA.

It belongs to the PTH family. As to quaternary structure, monomer.

It localises to the cytoplasm. The enzyme catalyses an N-acyl-L-alpha-aminoacyl-tRNA + H2O = an N-acyl-L-amino acid + a tRNA + H(+). Functionally, hydrolyzes ribosome-free peptidyl-tRNAs (with 1 or more amino acids incorporated), which drop off the ribosome during protein synthesis, or as a result of ribosome stalling. Its function is as follows. Catalyzes the release of premature peptidyl moieties from peptidyl-tRNA molecules trapped in stalled 50S ribosomal subunits, and thus maintains levels of free tRNAs and 50S ribosomes. The protein is Peptidyl-tRNA hydrolase of Tropheryma whipplei (strain Twist) (Whipple's bacillus).